The following is a 359-amino-acid chain: Probable C-C chemokine receptor type 3 (359 aa).

Residues 1 to 38 (MAFNTDEIKTVVESFETTPYEYEWAPPCEKVRIKELGS) are Extracellular-facing. A helical transmembrane segment spans residues 39 to 64 (WLLPPLYSLVFIIGLLGNMMVVLILI). The Cytoplasmic portion of the chain corresponds to 65 to 68 (KYRK). A helical transmembrane segment spans residues 69–95 (LQIMTNIYLFNLAISDLLFLFTVPFWI). Topologically, residues 96 to 111 (HYVLWNEWGFGHYMCK) are extracellular. Cysteine 110 and cysteine 187 form a disulfide bridge. A helical membrane pass occupies residues 112–133 (MLSGFYYLALYSEIFFIILLTI). Over 134 to 150 (DRYLAIVHAVFALRART) the chain is Cytoplasmic. A helical transmembrane segment spans residues 151–175 (VTFATITSIITWGLAGLAALPEFIF). The Extracellular portion of the chain corresponds to 176-201 (HESQDSFGEFSCSPRYPEGEEDSWKR). The helical transmembrane segment at 202–227 (FHALRMNIFGLALPLLIMVICYSGII) threads the bilayer. The Cytoplasmic portion of the chain corresponds to 228-243 (KTLLRCPNKKKHKAIR). The helical transmembrane segment at 244–268 (LIFVVMIVFFIFWTPYNLVLLFSAF) threads the bilayer. At 269–285 (HSTFLETSCQQSKHLDL) the chain is on the extracellular side. The helical transmembrane segment at 286–309 (AMQVTEVIAYTHCCINPVIYAFVG) threads the bilayer. Residues 310 to 359 (ERFRKHLRLFFHRNVAVYLGKYIPFLPGEKMERTSSVSPSTGEQEISVVF) are Cytoplasmic-facing.

Belongs to the G-protein coupled receptor 1 family. In terms of tissue distribution, detected in skeletal muscle and in trace amounts in leukocytes.

It localises to the cell membrane. Functionally, receptor for C-C type chemokine. Binds and responds to a variety of chemokines, including CCL11, CCL26, CCL7, CCL13, RANTES(CCL5) and CCL15. Subsequently transduces a signal by increasing the intracellular calcium ions level. In addition acts as a possible functional receptor for NARS1. The protein is Probable C-C chemokine receptor type 3 (Ccr3) of Mus musculus (Mouse).